Here is a 293-residue protein sequence, read N- to C-terminus: Ribosomal protein L11 methyltransferase (293 aa).

Residues threonine 145, glycine 166, aspartate 188, and asparagine 230 each contribute to the S-adenosyl-L-methionine site.

Belongs to the methyltransferase superfamily. PrmA family.

The protein localises to the cytoplasm. The enzyme catalyses L-lysyl-[protein] + 3 S-adenosyl-L-methionine = N(6),N(6),N(6)-trimethyl-L-lysyl-[protein] + 3 S-adenosyl-L-homocysteine + 3 H(+). Functionally, methylates ribosomal protein L11. The protein is Ribosomal protein L11 methyltransferase of Shewanella frigidimarina (strain NCIMB 400).